Here is a 245-residue protein sequence, read N- to C-terminus: Protein ARV 1 (245 aa).

The next 5 helical transmembrane spans lie at 70 to 90 (INPATVNIQHLLWKLVFAYLL), 117 to 137 (IKVLIGVLSANAAFIISFAIA), 163 to 183 (IFLLAMLVWEFPMSVIFFVDI), 200 to 220 (TMTRCIAVCLIAHLIRFLVGQ), and 224 to 244 (PTIFLIQIGSLLQYMSYFFRI).

It belongs to the ARV1 family. As to expression, restricted to tissues in which cells are actively dividing or expanding. Mostly expressed in roots and flowers, and, to a lower extent, in stems and leaves.

It localises to the endoplasmic reticulum membrane. In terms of biological role, mediator of sterol homeostasis involved in sterol uptake, trafficking and distribution into membranes. Also regulates the sphingolipid metabolism. This Arabidopsis thaliana (Mouse-ear cress) protein is Protein ARV 1.